Reading from the N-terminus, the 296-residue chain is Thymidylate synthase (296 aa).

DUMP is bound by residues Arg23 and 157-158 (RR). The active-site Nucleophile is the Cys177. DUMP contacts are provided by residues 198-201 (RSAD), Asn209, and 239-241 (HIY). Asp201 contacts (6R)-5,10-methylene-5,6,7,8-tetrahydrofolate. Residue Ala295 coordinates (6R)-5,10-methylene-5,6,7,8-tetrahydrofolate.

It belongs to the thymidylate synthase family. Bacterial-type ThyA subfamily. Homodimer.

Its subcellular location is the cytoplasm. The catalysed reaction is dUMP + (6R)-5,10-methylene-5,6,7,8-tetrahydrofolate = 7,8-dihydrofolate + dTMP. Its pathway is pyrimidine metabolism; dTTP biosynthesis. Catalyzes the reductive methylation of 2'-deoxyuridine-5'-monophosphate (dUMP) to 2'-deoxythymidine-5'-monophosphate (dTMP) while utilizing 5,10-methylenetetrahydrofolate (mTHF) as the methyl donor and reductant in the reaction, yielding dihydrofolate (DHF) as a by-product. This enzymatic reaction provides an intracellular de novo source of dTMP, an essential precursor for DNA biosynthesis. In Zymomonas mobilis subsp. mobilis (strain ATCC 31821 / ZM4 / CP4), this protein is Thymidylate synthase.